The chain runs to 255 residues: Small ribosomal subunit protein eS1 (255 aa).

Basic residues predominate over residues 1–18; the sequence is MAVGKNKRLSKGKKGLKK. The segment at 1-28 is disordered; the sequence is MAVGKNKRLSKGKKGLKKRTQDPFSRKD. An N-acetylalanine; partial modification is found at Ala2. Positions 19 to 28 are enriched in basic and acidic residues; sequence RTQDPFSRKD.

The protein belongs to the eukaryotic ribosomal protein eS1 family. Component of the small ribosomal subunit. Mature ribosomes consist of a small (40S) and a large (60S) subunit. The 40S subunit contains about 33 different proteins and 1 molecule of RNA (18S). The 60S subunit contains about 49 different proteins and 3 molecules of RNA (25S, 5.8S and 5S).

Its subcellular location is the cytoplasm. This Paracoccidioides lutzii (strain ATCC MYA-826 / Pb01) (Paracoccidioides brasiliensis) protein is Small ribosomal subunit protein eS1.